The sequence spans 56 residues: PI-stichotoxin-Hmg3a (56 aa).

The BPTI/Kunitz inhibitor domain occupies 4–54; sequence CLEPKVVGPCKARIRRFYYDSETGKCTPFIYGGCGGNGNNFETLHACRGIC. Disulfide bonds link C4–C54, C13–C37, and C29–C50.

It belongs to the venom Kunitz-type family. Sea anemone type 2 potassium channel toxin subfamily. Post-translationally, contains three disulfide bonds.

It localises to the secreted. Its subcellular location is the nematocyst. Its function is as follows. Serine protease inhibitor that inhibits trypsin (Ki=50 nM) and probably also chymotrypsin (Kd=1.6 nM). Has an anti-inflammatory effect in LPS-activated macrophages in vitro, specifically reducing release of TNF and IL6 but not nitric oxide and reducing expression of IL1B precursor. The polypeptide is PI-stichotoxin-Hmg3a (Heteractis magnifica (Magnificent sea anemone)).